Consider the following 272-residue polypeptide: Ribosomal RNA small subunit methyltransferase J (272 aa).

Residues 120-121, 136-137, 171-172, and Asp188 each bind S-adenosyl-L-methionine; these read RD, ER, and SS.

It belongs to the methyltransferase superfamily. RsmJ family.

The protein resides in the cytoplasm. The enzyme catalyses guanosine(1516) in 16S rRNA + S-adenosyl-L-methionine = N(2)-methylguanosine(1516) in 16S rRNA + S-adenosyl-L-homocysteine + H(+). In terms of biological role, specifically methylates the guanosine in position 1516 of 16S rRNA. This is Ribosomal RNA small subunit methyltransferase J from Colwellia psychrerythraea (strain 34H / ATCC BAA-681) (Vibrio psychroerythus).